Reading from the N-terminus, the 112-residue chain is Integration host factor subunit alpha (112 aa).

This sequence belongs to the bacterial histone-like protein family. Heterodimer of an alpha and a beta chain.

This protein is one of the two subunits of integration host factor, a specific DNA-binding protein that functions in genetic recombination as well as in transcriptional and translational control. This chain is Integration host factor subunit alpha, found in Sinorhizobium fredii (strain NBRC 101917 / NGR234).